The sequence spans 379 residues: Homoserine O-succinyltransferase (379 aa).

The AB hydrolase-1 domain occupies 51–360; it reads NAVLICHALS…DAPQGHDAFL (310 aa). Ser-157 acts as the Nucleophile in catalysis. Residue Arg-227 participates in substrate binding. Active-site residues include Asp-323 and His-356. Substrate is bound at residue Asp-357.

The protein belongs to the AB hydrolase superfamily. MetX family. As to quaternary structure, homodimer.

It is found in the cytoplasm. It catalyses the reaction L-homoserine + succinyl-CoA = O-succinyl-L-homoserine + CoA. It participates in amino-acid biosynthesis; L-methionine biosynthesis via de novo pathway; O-succinyl-L-homoserine from L-homoserine: step 1/1. Its activity is regulated as follows. Requires MetW for activity. In terms of biological role, transfers a succinyl group from succinyl-CoA to L-homoserine, forming succinyl-L-homoserine. The protein is Homoserine O-succinyltransferase of Pseudomonas syringae pv. syringae (strain B728a).